A 358-amino-acid polypeptide reads, in one-letter code: UDP-N-acetylglucosamine--N-acetylmuramyl-(pentapeptide) pyrophosphoryl-undecaprenol N-acetylglucosamine transferase (358 aa).

Residues 11-13, Arg163, Ser191, Ile245, and Gln290 contribute to the UDP-N-acetyl-alpha-D-glucosamine site; that span reads TGG.

It belongs to the glycosyltransferase 28 family. MurG subfamily.

It localises to the cell inner membrane. The enzyme catalyses di-trans,octa-cis-undecaprenyl diphospho-N-acetyl-alpha-D-muramoyl-L-alanyl-D-glutamyl-meso-2,6-diaminopimeloyl-D-alanyl-D-alanine + UDP-N-acetyl-alpha-D-glucosamine = di-trans,octa-cis-undecaprenyl diphospho-[N-acetyl-alpha-D-glucosaminyl-(1-&gt;4)]-N-acetyl-alpha-D-muramoyl-L-alanyl-D-glutamyl-meso-2,6-diaminopimeloyl-D-alanyl-D-alanine + UDP + H(+). It participates in cell wall biogenesis; peptidoglycan biosynthesis. Its function is as follows. Cell wall formation. Catalyzes the transfer of a GlcNAc subunit on undecaprenyl-pyrophosphoryl-MurNAc-pentapeptide (lipid intermediate I) to form undecaprenyl-pyrophosphoryl-MurNAc-(pentapeptide)GlcNAc (lipid intermediate II). In Janthinobacterium sp. (strain Marseille) (Minibacterium massiliensis), this protein is UDP-N-acetylglucosamine--N-acetylmuramyl-(pentapeptide) pyrophosphoryl-undecaprenol N-acetylglucosamine transferase.